The following is a 252-amino-acid chain: Small ribosomal subunit protein uS2A (252 aa).

N-acetylserine is present on Ser-2. The interval Glu-209–Trp-252 is disordered. Acidic residues predominate over residues Glu-241–Trp-252.

The protein belongs to the universal ribosomal protein uS2 family. In terms of assembly, component of the small ribosomal subunit. Mature ribosomes consist of a small (40S) and a large (60S) subunit. The 40S subunit contains about 33 different proteins and 1 molecule of RNA (18S). The 60S subunit contains about 49 different proteins and 3 molecules of RNA (25S, 5.8S and 5S). Interacts with RPS21.

Its subcellular location is the cytoplasm. Functionally, required for the assembly and/or stability of the 40S ribosomal subunit. Required for the processing of the 20S rRNA-precursor to mature 18S rRNA in a late step of the maturation of 40S ribosomal subunits. In Vanderwaltozyma polyspora (strain ATCC 22028 / DSM 70294 / BCRC 21397 / CBS 2163 / NBRC 10782 / NRRL Y-8283 / UCD 57-17) (Kluyveromyces polysporus), this protein is Small ribosomal subunit protein uS2A.